The chain runs to 425 residues: Trigger factor (425 aa).

Residues 158–231 (GDLVRVNMEV…VEEVYKRTLP (74 aa)) form the PPIase FKBP-type domain.

It belongs to the FKBP-type PPIase family. Tig subfamily.

Its subcellular location is the cytoplasm. The catalysed reaction is [protein]-peptidylproline (omega=180) = [protein]-peptidylproline (omega=0). Functionally, involved in protein export. Acts as a chaperone by maintaining the newly synthesized protein in an open conformation. Functions as a peptidyl-prolyl cis-trans isomerase. This chain is Trigger factor, found in Thermotoga petrophila (strain ATCC BAA-488 / DSM 13995 / JCM 10881 / RKU-1).